Here is a 394-residue protein sequence, read N- to C-terminus: Elongation factor Tu (394 aa).

The tr-type G domain occupies 10 to 204 (KPHVNVGTIG…YLDSYIPEPE (195 aa)). The tract at residues 19–26 (GHVDHGKT) is G1. A GTP-binding site is contributed by 19–26 (GHVDHGKT). Residue T26 coordinates Mg(2+). Positions 60 to 64 (GITIN) are G2. The interval 81-84 (DCPG) is G3. GTP contacts are provided by residues 81-85 (DCPGH) and 136-139 (NKCD). Residues 136 to 139 (NKCD) are G4. Residues 174 to 176 (SAL) are G5.

This sequence belongs to the TRAFAC class translation factor GTPase superfamily. Classic translation factor GTPase family. EF-Tu/EF-1A subfamily. Monomer.

The protein resides in the cytoplasm. It catalyses the reaction GTP + H2O = GDP + phosphate + H(+). In terms of biological role, GTP hydrolase that promotes the GTP-dependent binding of aminoacyl-tRNA to the A-site of ribosomes during protein biosynthesis. In Pectobacterium atrosepticum (strain SCRI 1043 / ATCC BAA-672) (Erwinia carotovora subsp. atroseptica), this protein is Elongation factor Tu.